A 406-amino-acid polypeptide reads, in one-letter code: Phosphopentomutase (406 aa).

The Mn(2+) site is built by Asp10, Asp305, His310, Asp346, His347, and His358.

Belongs to the phosphopentomutase family. Mn(2+) serves as cofactor.

It localises to the cytoplasm. The catalysed reaction is 2-deoxy-alpha-D-ribose 1-phosphate = 2-deoxy-D-ribose 5-phosphate. It catalyses the reaction alpha-D-ribose 1-phosphate = D-ribose 5-phosphate. The protein operates within carbohydrate degradation; 2-deoxy-D-ribose 1-phosphate degradation; D-glyceraldehyde 3-phosphate and acetaldehyde from 2-deoxy-alpha-D-ribose 1-phosphate: step 1/2. Functionally, isomerase that catalyzes the conversion of deoxy-ribose 1-phosphate (dRib-1-P) and ribose 1-phosphate (Rib-1-P) to deoxy-ribose 5-phosphate (dRib-5-P) and ribose 5-phosphate (Rib-5-P), respectively. The sequence is that of Phosphopentomutase from Methylobacterium radiotolerans (strain ATCC 27329 / DSM 1819 / JCM 2831 / NBRC 15690 / NCIMB 10815 / 0-1).